The following is a 112-amino-acid chain: MEVKAVYKYARISAKKMRDVAQEIQGLSVSQATDILSYTPKKGAYLLNKTLKSALANAENNAELSVDTLVVKSVMVDEGPTMRRTMPRARGSANMIRKRTSHITVILADQEG.

The protein belongs to the universal ribosomal protein uL22 family. As to quaternary structure, part of the 50S ribosomal subunit.

Its function is as follows. This protein binds specifically to 23S rRNA; its binding is stimulated by other ribosomal proteins, e.g. L4, L17, and L20. It is important during the early stages of 50S assembly. It makes multiple contacts with different domains of the 23S rRNA in the assembled 50S subunit and ribosome. In terms of biological role, the globular domain of the protein is located near the polypeptide exit tunnel on the outside of the subunit, while an extended beta-hairpin is found that lines the wall of the exit tunnel in the center of the 70S ribosome. The sequence is that of Large ribosomal subunit protein uL22 from Akkermansia muciniphila (strain ATCC BAA-835 / DSM 22959 / JCM 33894 / BCRC 81048 / CCUG 64013 / CIP 107961 / Muc).